The following is a 409-amino-acid chain: Runt-related transcription factor 3 (409 aa).

Disordered regions lie at residues 1 to 51 (MRIP…RTRP), 177 to 248 (GPRE…QFDR), and 346 to 409 (AGGG…WRPY). The segment covering 7 to 17 (PSTSRRFTPPS) has biased composition (polar residues). In terms of domain architecture, Runt spans 55 to 183 (SMVDVLADHA…TVDGPREPRR (129 aa)). The segment covering 187-204 (KIEDQTKAFPDRFGDLRM) has biased composition (basic and acidic residues). K193 participates in a covalent cross-link: Glycyl lysine isopeptide (Lys-Gly) (interchain with G-Cter in SUMO2). Residues 207–238 (TPSTPSPRGSLSTTSHFSSQAQTPIQGSSDLN) show a composition bias toward polar residues. S241 carries the phosphoserine modification. Polar residues-rich tracts occupy residues 355 to 376 (RMLT…NPSL) and 387 to 396 (SHSNSPTALS). Basic and acidic residues predominate over residues 400-409 (RMDEAVWRPY).

Heterodimer with CBFB. RUNX3 binds DNA as a monomer and through the Runt domain. DNA-binding is increased by heterodimerization. Interacts with TLE1 and SUV39H1. The tyrosine phosphorylated form (via runt domain) interacts with SRC (via protein kinase domain). Interacts with FYN and LCK. Interacts with FOXP3. Interacts with ZFHX3. Interacts with TBX21. Post-translationally, phosphorylated on tyrosine residues by SRC. Phosphorylated by LCK and FYN.

The protein resides in the nucleus. It localises to the cytoplasm. Forms the heterodimeric complex core-binding factor (CBF) with CBFB. RUNX members modulate the transcription of their target genes through recognizing the core consensus binding sequence 5'-TGTGGT-3', or very rarely, 5'-TGCGGT-3', within their regulatory regions via their runt domain, while CBFB is a non-DNA-binding regulatory subunit that allosterically enhances the sequence-specific DNA-binding capacity of RUNX. The heterodimers bind to the core site of a number of enhancers and promoters, including murine leukemia virus, polyomavirus enhancer, T-cell receptor enhancers, LCK, IL3 and GM-CSF promoters. May be involved in the control of cellular proliferation and/or differentiation. In association with ZFHX3, up-regulates CDKN1A promoter activity following TGF-beta stimulation. CBF complexes repress ZBTB7B transcription factor during cytotoxic (CD8+) T cell development. They bind to RUNX-binding sequence within the ZBTB7B locus acting as transcriptional silencer and allowing for cytotoxic T cell differentiation. CBF complexes binding to the transcriptional silencer is essential for recruitment of nuclear protein complexes that catalyze epigenetic modifications to establish epigenetic ZBTB7B silencing. Necessary for the development and survival of sensory neurons expressing parvalbumin. In Mus musculus (Mouse), this protein is Runt-related transcription factor 3 (Runx3).